The primary structure comprises 226 residues: MSVLVVTGTGTGIGKTVATAALACHARLHGIDVAVCKPVQTGTRDGDDDLAEVARLAGVTELHSLARFPEPLAPLAAARRSGAELPTRAQILDLITAADRPGRLTLVEGAGGLLVEIASDGSTLRDVAADLGAPVLTVVAPGLGTLNHTVLTLEALAHRQISSAGLVIGAWPAQPGVAEIDNRDALSRLAPVRAALPAGAGSLGRADFERLSVDAFDPSWVEGLAA.

12–17 (GIGKTV) contacts ATP. Thr16 serves as a coordination point for Mg(2+). The active site involves Lys37. Substrate is bound at residue Thr41. ATP is bound by residues Asp49, 108 to 111 (EGAG), and 197 to 199 (PAG). Mg(2+) is bound by residues Asp49 and Glu108.

It belongs to the dethiobiotin synthetase family. As to quaternary structure, homodimer. Mg(2+) serves as cofactor.

The protein resides in the cytoplasm. The enzyme catalyses (7R,8S)-7,8-diammoniononanoate + CO2 + ATP = (4R,5S)-dethiobiotin + ADP + phosphate + 3 H(+). It participates in cofactor biosynthesis; biotin biosynthesis; biotin from 7,8-diaminononanoate: step 1/2. Its function is as follows. Catalyzes a mechanistically unusual reaction, the ATP-dependent insertion of CO2 between the N7 and N8 nitrogen atoms of 7,8-diaminopelargonic acid (DAPA, also called 7,8-diammoniononanoate) to form a ureido ring. The sequence is that of ATP-dependent dethiobiotin synthetase BioD from Mycolicibacterium vanbaalenii (strain DSM 7251 / JCM 13017 / BCRC 16820 / KCTC 9966 / NRRL B-24157 / PYR-1) (Mycobacterium vanbaalenii).